The primary structure comprises 781 residues: Catenin beta-1 (781 aa).

Ala2 carries the N-acetylalanine modification. The tract at residues 2 to 23 (ATQADLMELDMAMEPDRKAAVS) is interaction with VCL. Ser23 is subject to Phosphoserine; by GSK3-beta; alternate. The O-linked (GlcNAc) serine; alternate glycan is linked to Ser23. Ser29 bears the Phosphoserine; by GSK3-beta mark. A phosphoserine; by GSK3-beta and HIPK2 mark is found at Ser33 and Ser37. Residues 34–57 (GIHSGATTTAPSLSGKGNPEEEDV) are disordered. Position 41 is a phosphothreonine; by GSK3-beta (Thr41). At Ser45 the chain carries Phosphoserine. Position 49 is an N6-acetyllysine (Lys49). Phosphotyrosine; by PTK6 is present on Tyr64. Tyr142 carries the post-translational modification Phosphotyrosine; by FYN and PTK6. 12 ARM repeats span residues 151-191 (RAIP…IMRS), 193-234 (QMVS…IFKS), 235-276 (GGIP…VRLA), 277-318 (GGLQ…ILAS), 319-360 (GGPQ…IVEA), 361-389 (GGMQALGLHLTDPSQRLVQNCLWTLRNLS), 400-441 (GLLG…VCQV), 442-484 (GGIE…AQNA), 489-530 (YGLP…LREQ), 531-571 (GAIP…EIVE), 594-636 (NTIP…AEGA), and 637-666 (TAPLTELLHSRNEGVATYAAAVLFRMSEDK). An interaction with BCL9 region spans residues 156-178 (LTKLLNDEDQVVVNKAAVMVHQL). Ser191 is modified (phosphoserine; by CDK5). Phosphoserine; by CDK5 is present on Ser246. Phosphotyrosine; by PTK6 is present on Tyr331. At Tyr333 the chain carries Phosphotyrosine; by SRC and PTK6. Residue Ser552 is modified to Phosphoserine. The residue at position 556 (Thr556) is a (Microbial infection) Phosphothreonine. Phosphothreonine is present on Thr556. Residue Cys619 is modified to S-nitrosocysteine. Residue Ser675 is modified to Phosphoserine. The interval 705-781 (EPLGYRQDDP…NQLAWFDTDL (77 aa)) is disordered. Residues 734-745 (MMEHEMGGHHPG) are compositionally biased toward basic and acidic residues. The interaction with SCRIB stretch occupies residues 772 to 781 (NQLAWFDTDL).

The protein belongs to the beta-catenin family. As to quaternary structure, two separate complex-associated pools are found in the cytoplasm. The majority is present as component of an E-cadherin:catenin adhesion complex composed of at least E-cadherin/CDH1 and beta-catenin/CTNNB1, and possibly alpha-catenin/CTNNA1; the complex is located to adherens junctions. The stable association of CTNNA1 is controversial as CTNNA1 was shown not to bind to F-actin when assembled in the complex. Alternatively, the CTNNA1-containing complex may be linked to F-actin by other proteins such as LIMA1. Another cytoplasmic pool is part of a large complex containing AXIN1, AXIN2, APC, CSNK1A1 and GSK3B that promotes phosphorylation on N-terminal Ser and Thr residues and ubiquitination of CTNNB1 via BTRC and its subsequent degradation by the proteasome. Wnt-dependent activation of DVL antagonizes the action of GSK3B. When GSK3B activity is inhibited the complex dissociates, CTNNB1 is dephosphorylated and is no longer targeted for destruction. The stabilized protein translocates to the nucleus, where it binds TCF/LEF-1 family members, BCL9, BCL9L and possibly also RUVBL1 and CHD8. Binds CTNNBIP and EP300. CTNNB1 forms a ternary complex with LEF1 and EP300 that is disrupted by CTNNBIP1 binding. Interacts with TAX1BP3 (via the PDZ domain); this interaction inhibits the transcriptional activity of CTNNB1. Interacts with AJAP1, BAIAP1, CARM1, CTNNA3, CXADR and PCDH11Y. Binds NHERF1. Interacts with GLIS2 and MUC1. Interacts with SLC30A9. Interacts with XIRP1. Interacts directly with AXIN1; the interaction is regulated by CDK2 phosphorylation of AXIN1. Interacts with SCRIB. Interacts with RAPGEF2. Interacts with PTPRU (via the cytoplasmic juxtamembrane domain). Interacts with EMD. Interacts with TNIK and TCF7L2. Interacts with SESTD1 and TRPC4. Interacts with CAV1. Interacts with TRPV4. The TRPV4 and CTNNB1 complex can interact with CDH1. Interacts with VCL. Interacts with PTPRJ. Interacts with PKT7 and CDK2. Interacts with FAT1 (via the cytoplasmic domain). Interacts with NANOS1 and NDRG2. Interacts with isoform 1 of NEK2. Interacts with both isoform 1 and isoform 2 of CDK5. Interacts with PTK6. Interacts with SOX7; this interaction may lead to proteasomal degradation of active CTNNB1 and thus inhibition of Wnt/beta-catenin-stimulated transcription. Identified in a complex with HINT1 and MITF. Interacts with FHIT. The CTNNB1 and TCF7L2/TCF4 complex interacts with PML (isoform PML-4). Interacts with FERMT2. Identified in a complex with TCF7L2/TCF4 and FERMT2. Interacts with RORA. May interact with P-cadherin/CDH3. Interacts with RNF220. Interacts with CTNND2. Interacts (via the C-terminal region) with CBY1. The complex composed, at least, of APC, CTNNB1 and GSK3B interacts with JPT1; the interaction requires the inactive form of GSK3B (phosphorylated at 'Ser-9'). Interacts with DLG5. Interacts with FAM53B; promoting translocation to the nucleus. Interacts with TMEM170B. Interacts with AHI1. Interacts with GID8. Component of an cadherin:catenin adhesion complex composed of at least of CDH26, beta-catenin/CTNNB1, alpha-catenin/CTNNA1 and p120 catenin/CTNND1. Forms a complex comprising APPL1, RUVBL2, APPL2, HDAC1 and HDAC2. Interacts with IRF2BPL; mediates the ubiquitination and degradation of CTNNB1. Interacts with AMFR. Interacts with LMBR1L. Interacts with SOX30; prevents interaction of CTNNB1 with TCF7L2/TCF4 and leads to inhibition of Wnt signaling. Interacts with SOX9; inhibiting CTNNB1 activity by competing with the binding sites of TCF/LEF within CTNNB1, thereby inhibiting the Wnt signaling. Interacts with SPN/CD43 cytoplasmic tail. Interacts (when phosphorylated at Tyr-333) with isoform M2 of PKM (PKM2); promoting transcription activation. Interacts with PKP2 (via HEAD domain). Interacts with CDH1. Interacts (when unphosphorylated) with FLYWCH1, perhaps preventing interaction of CTNNB1 with TCF4, and thereby regulating transcription activation; phosphorylation of CTNNB1 may inhibit the interaction. Interacts (via the central armadillo domains) with probable transcriptional regulator ADNP (via N-terminal region); interaction is direct and stabilizes CTNNB1 by modulating its phosphorylation by glycogen synthase kinase-3 beta GSK3B. Interacts with NR5A2. Interacts with DSG2; the interaction promotes localization of CTNNB1 at cell junctions thus reducing its nuclear localization and subsequent transcription of CTNNB1/TCF-target genes. (Microbial infection) Interacts with herpes virus 8 protein vPK; this interaction inhibits the Wnt signaling pathway. In terms of processing, phosphorylation at Ser-552 by AMPK promotes stabilization of the protein, enhancing TCF/LEF-mediated transcription. Phosphorylation by GSK3B requires prior phosphorylation of Ser-45 by another kinase. Phosphorylation proceeds then from Thr-41 to Ser-37 and Ser-33. Phosphorylated by NEK2. EGF stimulates tyrosine phosphorylation. Phosphorylated on Ser-33 and Ser-37 by HIPK2 and GSK3B, this phosphorylation triggers proteasomal degradation. Phosphorylation on Ser-191 and Ser-246 by CDK5. Phosphorylation by CDK2 regulates insulin internalization. Phosphorylation by PTK6 at Tyr-64, Tyr-142, Tyr-331 and/or Tyr-333 with the predominant site at Tyr-64 is not essential for inhibition of transcriptional activity. Phosphorylation by SRC at Tyr-333 promotes interaction with isoform M2 of PKM (PKM2); promoting transcription activation. Ubiquitinated by the SCF(BTRC) E3 ligase complex when phosphorylated by GSK3B, leading to its degradation. Ubiquitinated by a E3 ubiquitin ligase complex containing UBE2D1, SIAH1, CACYBP/SIP, SKP1, APC and TBL1X, leading to its subsequent proteasomal degradation. Ubiquitinated and degraded following interaction with SOX9. Ubiquitinated via 'Lys-11'- and 'Lys-29'-linked ubiquitin chains by UBR5, leading to its stabilization. Post-translationally, S-nitrosylation at Cys-619 within adherens junctions promotes VEGF-induced, NO-dependent endothelial cell permeability by disrupting interaction with E-cadherin, thus mediating disassembly adherens junctions. In terms of processing, O-glycosylation at Ser-23 decreases nuclear localization and transcriptional activity, and increases localization to the plasma membrane and interaction with E-cadherin CDH1. Deacetylated at Lys-49 by SIRT1. Post-translationally, phosphorylated at Thr-556 by herpes virus 1/HHV-1 leading to CTNNB1 inhibition. In terms of tissue distribution, expressed in several hair follicle cell types: basal and peripheral matrix cells, and cells of the outer and inner root sheaths. Expressed in colon. Present in cortical neurons (at protein level). Expressed in breast cancer tissues (at protein level).

It localises to the cytoplasm. The protein localises to the nucleus. Its subcellular location is the cytoskeleton. The protein resides in the cell junction. It is found in the adherens junction. It localises to the cell membrane. The protein localises to the microtubule organizing center. Its subcellular location is the centrosome. The protein resides in the spindle pole. It is found in the synapse. It localises to the cilium basal body. Functionally, key downstream component of the canonical Wnt signaling pathway. In the absence of Wnt, forms a complex with AXIN1, AXIN2, APC, CSNK1A1 and GSK3B that promotes phosphorylation on N-terminal Ser and Thr residues and ubiquitination of CTNNB1 via BTRC and its subsequent degradation by the proteasome. In the presence of Wnt ligand, CTNNB1 is not ubiquitinated and accumulates in the nucleus, where it acts as a coactivator for transcription factors of the TCF/LEF family, leading to activate Wnt responsive genes. Also acts as a coactivator for other transcription factors, such as NR5A2. Promotes epithelial to mesenchymal transition/mesenchymal to epithelial transition (EMT/MET) via driving transcription of CTNNB1/TCF-target genes. Involved in the regulation of cell adhesion, as component of an E-cadherin:catenin adhesion complex. Acts as a negative regulator of centrosome cohesion. Involved in the CDK2/PTPN6/CTNNB1/CEACAM1 pathway of insulin internalization. Blocks anoikis of malignant kidney and intestinal epithelial cells and promotes their anchorage-independent growth by down-regulating DAPK2. Disrupts PML function and PML-NB formation by inhibiting RANBP2-mediated sumoylation of PML. Promotes neurogenesis by maintaining sympathetic neuroblasts within the cell cycle. Involved in chondrocyte differentiation via interaction with SOX9: SOX9-binding competes with the binding sites of TCF/LEF within CTNNB1, thereby inhibiting the Wnt signaling. Acts as a positive regulator of odontoblast differentiation during mesenchymal tooth germ formation, via promoting the transcription of differentiation factors such as LEF1, BMP2 and BMP4. Activity is repressed in a MSX1-mediated manner at the bell stage of mesenchymal tooth germ formation which prevents premature differentiation of odontoblasts. The sequence is that of Catenin beta-1 from Homo sapiens (Human).